The sequence spans 217 residues: Protein-L-isoaspartate O-methyltransferase (217 aa).

S59 is a catalytic residue.

This sequence belongs to the methyltransferase superfamily. L-isoaspartyl/D-aspartyl protein methyltransferase family.

The protein localises to the cytoplasm. It carries out the reaction [protein]-L-isoaspartate + S-adenosyl-L-methionine = [protein]-L-isoaspartate alpha-methyl ester + S-adenosyl-L-homocysteine. Catalyzes the methyl esterification of L-isoaspartyl residues in peptides and proteins that result from spontaneous decomposition of normal L-aspartyl and L-asparaginyl residues. It plays a role in the repair and/or degradation of damaged proteins. The chain is Protein-L-isoaspartate O-methyltransferase (pcm) from Methanothermobacter thermautotrophicus (strain ATCC 29096 / DSM 1053 / JCM 10044 / NBRC 100330 / Delta H) (Methanobacterium thermoautotrophicum).